We begin with the raw amino-acid sequence, 180 residues long: NAD(P)H-quinone oxidoreductase subunit I, chloroplastic (180 aa).

4Fe-4S ferredoxin-type domains are found at residues 55–84 and 95–124; these read GRIHFEFDKCIACEVCVRVCPIDLPVVDWR and LNYSIDFGVCIFCGNCVEYCPTSCLSMTEE. Positions 64, 67, 70, 74, 104, 107, 110, and 114 each coordinate [4Fe-4S] cluster.

It belongs to the complex I 23 kDa subunit family. NDH is composed of at least 16 different subunits, 5 of which are encoded in the nucleus. [4Fe-4S] cluster serves as cofactor.

It localises to the plastid. The protein localises to the chloroplast thylakoid membrane. It catalyses the reaction a plastoquinone + NADH + (n+1) H(+)(in) = a plastoquinol + NAD(+) + n H(+)(out). It carries out the reaction a plastoquinone + NADPH + (n+1) H(+)(in) = a plastoquinol + NADP(+) + n H(+)(out). Functionally, NDH shuttles electrons from NAD(P)H:plastoquinone, via FMN and iron-sulfur (Fe-S) centers, to quinones in the photosynthetic chain and possibly in a chloroplast respiratory chain. The immediate electron acceptor for the enzyme in this species is believed to be plastoquinone. Couples the redox reaction to proton translocation, and thus conserves the redox energy in a proton gradient. The sequence is that of NAD(P)H-quinone oxidoreductase subunit I, chloroplastic from Agrostis stolonifera (Creeping bentgrass).